A 111-amino-acid chain; its full sequence is Small ubiquitin-related modifier 3 (111 aa).

A Ubiquitin-like domain is found at 16 to 93 (AHVILKVKSQ…IDACRAMSGG (78 aa)). Glycine 93 is covalently cross-linked (Glycyl lysine isopeptide (Gly-Lys) (interchain with K-? in acceptor proteins)).

Belongs to the ubiquitin family. SUMO subfamily. In terms of assembly, interacts with SAE2, SCE1, SIZ1 and MMS21. Covalently attached to a number of proteins. Interacts with NPR1; this interaction promotes NPR1 phosphorylation and triggers its sumoylation and subsequent degradation.

It is found in the nucleus. It localises to the cytoplasm. Ubiquitin-like protein which can be covalently attached to target lysines as a monomer. Does not seem to be involved in protein degradation and may function as an antagonist of ubiquitin in the degradation process. Promotes NPR1 sumoylation to activate defense gene expression and regulate its degradation. The chain is Small ubiquitin-related modifier 3 from Arabidopsis thaliana (Mouse-ear cress).